The sequence spans 132 residues: Large ribosomal subunit protein uL22c (132 aa).

Belongs to the universal ribosomal protein uL22 family. In terms of assembly, part of the 50S ribosomal subunit.

Its subcellular location is the plastid. It localises to the chloroplast. This protein binds specifically to 23S rRNA. Its function is as follows. The globular domain of the protein is located near the polypeptide exit tunnel on the outside of the subunit, while an extended beta-hairpin is found that lines the wall of the exit tunnel in the center of the 70S ribosome. This chain is Large ribosomal subunit protein uL22c (rpl22), found in Populus trichocarpa (Western balsam poplar).